The following is a 184-amino-acid chain: 20.9 kDa protein (184 aa).

The polypeptide is 20.9 kDa protein (Zymomonas mobilis subsp. mobilis (strain ATCC 10988 / DSM 424 / LMG 404 / NCIMB 8938 / NRRL B-806 / ZM1)).